Here is a 205-residue protein sequence, read N- to C-terminus: Small ribosomal subunit protein uS4 (205 aa).

Positions E17–S46 are disordered. The S4 RNA-binding domain maps to S94 to V157.

The protein belongs to the universal ribosomal protein uS4 family. As to quaternary structure, part of the 30S ribosomal subunit. Contacts protein S5. The interaction surface between S4 and S5 is involved in control of translational fidelity.

In terms of biological role, one of the primary rRNA binding proteins, it binds directly to 16S rRNA where it nucleates assembly of the body of the 30S subunit. Functionally, with S5 and S12 plays an important role in translational accuracy. In Mesorhizobium japonicum (strain LMG 29417 / CECT 9101 / MAFF 303099) (Mesorhizobium loti (strain MAFF 303099)), this protein is Small ribosomal subunit protein uS4.